A 290-amino-acid polypeptide reads, in one-letter code: tRNA(Ile)-lysidine synthase (290 aa).

Residue 12–17 (SGGSDS) coordinates ATP.

Belongs to the tRNA(Ile)-lysidine synthase family.

It localises to the cytoplasm. The catalysed reaction is cytidine(34) in tRNA(Ile2) + L-lysine + ATP = lysidine(34) in tRNA(Ile2) + AMP + diphosphate + H(+). Ligates lysine onto the cytidine present at position 34 of the AUA codon-specific tRNA(Ile) that contains the anticodon CAU, in an ATP-dependent manner. Cytidine is converted to lysidine, thus changing the amino acid specificity of the tRNA from methionine to isoleucine. The protein is tRNA(Ile)-lysidine synthase of Mycoplasma genitalium (strain ATCC 33530 / DSM 19775 / NCTC 10195 / G37) (Mycoplasmoides genitalium).